The primary structure comprises 774 residues: Beta-xylosidase/alpha-L-arabinofuranosidase 1 (774 aa).

The first 33 residues, 1-33, serve as a signal peptide directing secretion; the sequence is ANTKNREPKVSSVFLCFSIFYVTVLLNCNHVYG. Asparagine 48 and asparagine 136 each carry an N-linked (GlcNAc...) asparagine glycan. The active site involves aspartate 303. Asparagine 437 and asparagine 530 each carry an N-linked (GlcNAc...) asparagine glycan.

It belongs to the glycoside hydrolase 3 family. Post-translationally, proteolytically cleaved in roots to form a 65 kDa protein.

The protein localises to the secreted. Its subcellular location is the extracellular space. It is found in the extracellular matrix. The enzyme catalyses Hydrolysis of (1-&gt;4)-beta-D-xylans, to remove successive D-xylose residues from the non-reducing termini.. It carries out the reaction Hydrolysis of terminal non-reducing alpha-L-arabinofuranoside residues in alpha-L-arabinosides.. Its function is as follows. A bifunctional beta-xylosidase/alpha-L-arabinosidase, exo-enzyme that acts synergistically with endohydrolases. Releases xylose and arabinose from cell walls. Does not cleave xylan from oat spelts although xylan from oat spelts was degraded to xylose when this enzyme was used in combination with xylanase. Also releases xylose and arabinose from aryl glycosides, xylo-oligosaccharides, arabinan from sugar beet and arabino-oligosaccharides, arabinan from sugar beet and arabinoxylan from wheat. The sequence is that of Beta-xylosidase/alpha-L-arabinofuranosidase 1 from Medicago sativa subsp. varia (Alfalfa).